The primary structure comprises 338 residues: Formamidase (338 aa).

One can recognise a CN hydrolase domain in the interval 15–257; the sequence is VVIGLAQLAL…DEIVCCELRP (243 aa). E61 acts as the Proton acceptor in catalysis. K130 (proton donor) is an active-site residue. C163 functions as the Nucleophile in the catalytic mechanism.

Belongs to the carbon-nitrogen hydrolase superfamily. Aliphatic amidase family.

It carries out the reaction formamide + H2O = formate + NH4(+). Functionally, is an aliphatic amidase with a restricted substrate specificity, as it only hydrolyzes formamide. The protein is Formamidase of Pseudomonas syringae pv. syringae (strain B728a).